Reading from the N-terminus, the 209-residue chain is MEEILKHFPDLTNLQITQFEKLEALYQDWNAKINVISRKDIDELYTKHVLHSLAIAKIQKFEAGTYVLDVGTGGGFPGIPLAILFPETRFYLIDVILKKIKVVQAVAEALELKNVKAEQIRAENVKGDFDFIVSRAVTNMPDFVCWIKDKIKKTNKHELKNGILYLKGGDLTEELQDFPKAKEYNISEFFADDFFETKKVVHVPLKFKL.

Residues Gly-71, Phe-76, 122–123, and Arg-135 contribute to the S-adenosyl-L-methionine site; that span reads AE.

The protein belongs to the methyltransferase superfamily. RNA methyltransferase RsmG family.

The protein localises to the cytoplasm. In terms of biological role, specifically methylates the N7 position of a guanine in 16S rRNA. The sequence is that of Ribosomal RNA small subunit methyltransferase G from Flavobacterium psychrophilum (strain ATCC 49511 / DSM 21280 / CIP 103535 / JIP02/86).